A 142-amino-acid chain; its full sequence is Large ribosomal subunit protein uL11 (142 aa).

Belongs to the universal ribosomal protein uL11 family. In terms of assembly, part of the ribosomal stalk of the 50S ribosomal subunit. Interacts with L10 and the large rRNA to form the base of the stalk. L10 forms an elongated spine to which L12 dimers bind in a sequential fashion forming a multimeric L10(L12)X complex. Post-translationally, one or more lysine residues are methylated.

Forms part of the ribosomal stalk which helps the ribosome interact with GTP-bound translation factors. This Shewanella baltica (strain OS223) protein is Large ribosomal subunit protein uL11.